Consider the following 704-residue polypeptide: Elongation factor G 1 (704 aa).

The region spanning 8-291 is the tr-type G domain; sequence ERYRNIGISA…AVIDYLPSPA (284 aa). Residues 17–24, 88–92, and 142–145 contribute to the GTP site; these read AHIDAGKT, DTPGH, and NKMD.

The protein belongs to the TRAFAC class translation factor GTPase superfamily. Classic translation factor GTPase family. EF-G/EF-2 subfamily.

It localises to the cytoplasm. In terms of biological role, catalyzes the GTP-dependent ribosomal translocation step during translation elongation. During this step, the ribosome changes from the pre-translocational (PRE) to the post-translocational (POST) state as the newly formed A-site-bound peptidyl-tRNA and P-site-bound deacylated tRNA move to the P and E sites, respectively. Catalyzes the coordinated movement of the two tRNA molecules, the mRNA and conformational changes in the ribosome. The protein is Elongation factor G 1 of Burkholderia thailandensis (strain ATCC 700388 / DSM 13276 / CCUG 48851 / CIP 106301 / E264).